A 288-amino-acid polypeptide reads, in one-letter code: MALVSMKEMLKKAKAGHYAVGQFNLNNLQWAQAILQAAEEEQAPVIVAASDRLVDFLGGFQTITSMVNSLLIEMKITVPVALHLDHGMTIDRCKQAIDAGFTSVMIDGSHSPIEDNIAMTKEVVAYAQPRNVSVEAEVGTVGGMEDGLIGGVKYADLDECVRVVEEANIDALAAALGSVHGPYQGEPKLGFEEMKVISERTGVPLVLHGGSGIPDYQIRKAILLGHAKINVNTECLQAWAHAVRTILTNDQDIYDYRAITTPGTEAIVETVKTKMREFQTSGKAKERV.

Asp85 acts as the Proton donor in catalysis. Zn(2+) contacts are provided by His86 and His180. Gly181 provides a ligand contact to dihydroxyacetone phosphate. His208 provides a ligand contact to Zn(2+). Residues 209–211 and 230–233 contribute to the dihydroxyacetone phosphate site; these read GGS and NVNT. Phosphothreonine is present on Thr233.

This sequence belongs to the class II fructose-bisphosphate aldolase family. IolJ subfamily. Zn(2+) is required as a cofactor.

It carries out the reaction 6-phospho-5-dehydro-2-deoxy-D-gluconate = 3-oxopropanoate + dihydroxyacetone phosphate. The protein operates within polyol metabolism; myo-inositol degradation into acetyl-CoA; acetyl-CoA from myo-inositol: step 6/7. Functionally, produces dihydroxyacetone phosphate (DHAP or glycerone phosphate) and malonic semialdehyde (MSA or 3-oxopropanoate) from 6-phospho-5-dehydro-2-deoxy-D-gluconate (DKGP). The sequence is that of 6-phospho-5-dehydro-2-deoxy-D-gluconate aldolase (iolJ) from Halalkalibacterium halodurans (strain ATCC BAA-125 / DSM 18197 / FERM 7344 / JCM 9153 / C-125) (Bacillus halodurans).